The sequence spans 1338 residues: P-type sodium-transporting ATPase4 (1338 aa).

Residues 1 to 106 form a disordered region; that stretch reads MAARASADKL…KSISSVSQMH (106 aa). Over residues 55 to 69 the composition is skewed to basic and acidic residues; that stretch reads AEEKVAGHDGESPRR. The segment covering 91–104 has biased composition (polar residues); the sequence is GHSQLGKSISSVSQ. Transmembrane regions (helical) follow at residues 229 to 249, 255 to 275, 418 to 438, 456 to 476, 985 to 1005, 1068 to 1088, 1261 to 1281, and 1288 to 1308; these read IFIQQFLSPVVLLLLVAAIAS, WVEGAAIFIIVTLNASLATYM, LGGMIGLIAICVLIIVVVVAI, IVLVAVGFAVSSIPEGLPMVV, FVCFLLGTNIGEIIYLTIAIA, IFEAGCVLMSLALGLYLCTGV, MHLACSISATLTSLLTIVPGI, and CALPWYLYLFAIGCGFVNLIL.

It belongs to the cation transport ATPase (P-type) (TC 3.A.3) family.

Its subcellular location is the cell membrane. The enzyme catalyses Na(+)(in) + ATP + H2O = Na(+)(out) + ADP + phosphate + H(+). With respect to regulation, inhibited by cipargamin, a synthetic spiroindolone. Inhibited by pyrazoleamide PA21A050, structurally unrelated to the spiroindolones. Inhibited by (+)-SJ733, a dihydroisoquinolone compound. In terms of biological role, sodium-exporting ATPase. Required for the extrusion of Na(+) from the parasites to maintain a low cytosolic concentration of Na(+). Required for maintaining the viability of extracellular parasites but not for intracellular growth, egress or invasion. Involved in parasite virulence. In Toxoplasma gondii (strain ATCC 50861 / VEG), this protein is P-type sodium-transporting ATPase4.